The following is a 22-amino-acid chain: Unknown protein 20 from 2D-PAGE (22 aa).

The polypeptide is Unknown protein 20 from 2D-PAGE (Bombyx mori (Silk moth)).